We begin with the raw amino-acid sequence, 91 residues long: Large ribosomal subunit protein bL31B (91 aa).

Belongs to the bacterial ribosomal protein bL31 family. Type B subfamily. As to quaternary structure, part of the 50S ribosomal subunit.

The sequence is that of Large ribosomal subunit protein bL31B from Neisseria meningitidis serogroup C (strain 053442).